A 107-amino-acid polypeptide reads, in one-letter code: U1-lycotoxin-Ls1b (107 aa).

A signal peptide spans 1-20; sequence MMKVLVVVALLATLISYSSS. Residues 21-41 constitute a propeptide that is removed on maturation; the sequence is EGIDDLEADELLSLMANEQTR. 4 disulfide bridges follow: cysteine 44–cysteine 59, cysteine 51–cysteine 68, cysteine 58–cysteine 86, and cysteine 70–cysteine 84.

It belongs to the neurotoxin 19 (CSTX) family. 04 (U1-Lctx) subfamily. As to expression, expressed by the venom gland.

Its subcellular location is the secreted. This is U1-lycotoxin-Ls1b from Lycosa singoriensis (Wolf spider).